Consider the following 180-residue polypeptide: MLVVGRIGKPHGIRGEVTVEVRTDEPETRFAPGSVLRTEPGANVPAHPGAYRVPGELTVEAARWHQGRVLLVTFEGVLDRNVAEALRGTLVGVDRADVAPPTDPEEFHDHQLVGLAVVTSAGERLGEIARIDHAPAADLLVLRRPGRRDVLIPFVQAIVPEIDLAGGRVVVDPPGGLLDL.

The PRC barrel domain maps to proline 104–leucine 177.

The protein belongs to the RimM family. In terms of assembly, binds ribosomal protein uS19.

It localises to the cytoplasm. Its function is as follows. An accessory protein needed during the final step in the assembly of 30S ribosomal subunit, possibly for assembly of the head region. Essential for efficient processing of 16S rRNA. May be needed both before and after RbfA during the maturation of 16S rRNA. It has affinity for free ribosomal 30S subunits but not for 70S ribosomes. The protein is Ribosome maturation factor RimM of Salinispora tropica (strain ATCC BAA-916 / DSM 44818 / JCM 13857 / NBRC 105044 / CNB-440).